Consider the following 65-residue polypeptide: Large ribosomal subunit protein bL35 (65 aa).

Belongs to the bacterial ribosomal protein bL35 family.

In Psychrobacter arcticus (strain DSM 17307 / VKM B-2377 / 273-4), this protein is Large ribosomal subunit protein bL35.